Consider the following 108-residue polypeptide: UPF0060 membrane protein YnfA (108 aa).

At 1 to 5 (MFKTT) the chain is on the periplasmic side. Residues 6–26 (LLFFITALCEIIGCFLPWLWL) traverse the membrane as a helical segment. The Cytoplasmic segment spans residues 27 to 30 (KRNG). A helical transmembrane segment spans residues 31 to 51 (SIWLLLPAGVSLAFFVWLLTL). Over 52 to 60 (HPAASGRVY) the chain is Periplasmic. A helical transmembrane segment spans residues 61–81 (AAYGGVYVCTALLWLRFIDGV). Over 82–84 (KLS) the chain is Cytoplasmic. A helical transmembrane segment spans residues 85-105 (LYDWSGALIALCGMLIIVAGW). Residues 106-108 (GRA) are Periplasmic-facing.

Belongs to the UPF0060 family.

Its subcellular location is the cell inner membrane. The chain is UPF0060 membrane protein YnfA from Escherichia fergusonii (strain ATCC 35469 / DSM 13698 / CCUG 18766 / IAM 14443 / JCM 21226 / LMG 7866 / NBRC 102419 / NCTC 12128 / CDC 0568-73).